Consider the following 227-residue polypeptide: ATP synthase F(0) complex subunit a (227 aa).

6 helical membrane passes run 14–34 (LLGI…LPSP), 69–89 (WALI…LGLL), 98–118 (QLSM…LTGL), 139–159 (IPAL…ALGV), 174–194 (LIST…VLTA), and 196–216 (VLLL…YVFV).

This sequence belongs to the ATPase A chain family. Component of the ATP synthase complex composed at least of ATP5F1A/subunit alpha, ATP5F1B/subunit beta, ATP5MC1/subunit c (homooctomer), MT-ATP6/subunit a, MT-ATP8/subunit 8, ATP5ME/subunit e, ATP5MF/subunit f, ATP5MG/subunit g, ATP5MK/subunit k, ATP5MJ/subunit j, ATP5F1C/subunit gamma, ATP5F1D/subunit delta, ATP5F1E/subunit epsilon, ATP5PF/subunit F6, ATP5PB/subunit b, ATP5PD/subunit d, ATP5PO/subunit OSCP. ATP synthase complex consists of a soluble F(1) head domain (subunits alpha(3) and beta(3)) - the catalytic core - and a membrane F(0) domain - the membrane proton channel (subunits c, a, 8, e, f, g, k and j). These two domains are linked by a central stalk (subunits gamma, delta, and epsilon) rotating inside the F1 region and a stationary peripheral stalk (subunits F6, b, d, and OSCP). Interacts with DNAJC30; interaction is direct.

It localises to the mitochondrion inner membrane. The catalysed reaction is H(+)(in) = H(+)(out). Subunit a, of the mitochondrial membrane ATP synthase complex (F(1)F(0) ATP synthase or Complex V) that produces ATP from ADP in the presence of a proton gradient across the membrane which is generated by electron transport complexes of the respiratory chain. ATP synthase complex consist of a soluble F(1) head domain - the catalytic core - and a membrane F(1) domain - the membrane proton channel. These two domains are linked by a central stalk rotating inside the F(1) region and a stationary peripheral stalk. During catalysis, ATP synthesis in the catalytic domain of F(1) is coupled via a rotary mechanism of the central stalk subunits to proton translocation. With the subunit c (ATP5MC1), forms the proton-conducting channel in the F(0) domain, that contains two crucial half-channels (inlet and outlet) that facilitate proton movement from the mitochondrial intermembrane space (IMS) into the matrix. Protons are taken up via the inlet half-channel and released through the outlet half-channel, following a Grotthuss mechanism. The chain is ATP synthase F(0) complex subunit a from Struthio camelus (Common ostrich).